A 381-amino-acid polypeptide reads, in one-letter code: Chaperone protein DnaJ (381 aa).

Residues 5-70 form the J domain; that stretch reads DYYDVLGVSK…EKKAAYDRFG (66 aa). The segment at 140–218 adopts a CR-type zinc-finger fold; the sequence is GLQKTINVPT…CRGQGRVEKD (79 aa). Positions 153, 156, 170, 173, 192, 195, 206, and 209 each coordinate Zn(2+). 4 CXXCXGXG motif repeats span residues 153–160, 170–177, 192–199, and 206–213; these read CSSCEGTG, CPTCSGMG, CPTCSGLG, and CKSCRGQG.

Belongs to the DnaJ family. Homodimer. The cofactor is Zn(2+).

Its subcellular location is the cytoplasm. Its function is as follows. Participates actively in the response to hyperosmotic and heat shock by preventing the aggregation of stress-denatured proteins and by disaggregating proteins, also in an autonomous, DnaK-independent fashion. Unfolded proteins bind initially to DnaJ; upon interaction with the DnaJ-bound protein, DnaK hydrolyzes its bound ATP, resulting in the formation of a stable complex. GrpE releases ADP from DnaK; ATP binding to DnaK triggers the release of the substrate protein, thus completing the reaction cycle. Several rounds of ATP-dependent interactions between DnaJ, DnaK and GrpE are required for fully efficient folding. Also involved, together with DnaK and GrpE, in the DNA replication of plasmids through activation of initiation proteins. The chain is Chaperone protein DnaJ from Ruegeria pomeroyi (strain ATCC 700808 / DSM 15171 / DSS-3) (Silicibacter pomeroyi).